The chain runs to 220 residues: Deoxyribose-phosphate aldolase (220 aa).

Aspartate 92 acts as the Proton donor/acceptor in catalysis. Lysine 155 acts as the Schiff-base intermediate with acetaldehyde in catalysis. Lysine 184 acts as the Proton donor/acceptor in catalysis.

This sequence belongs to the DeoC/FbaB aldolase family. DeoC type 1 subfamily.

The protein resides in the cytoplasm. The enzyme catalyses 2-deoxy-D-ribose 5-phosphate = D-glyceraldehyde 3-phosphate + acetaldehyde. It functions in the pathway carbohydrate degradation; 2-deoxy-D-ribose 1-phosphate degradation; D-glyceraldehyde 3-phosphate and acetaldehyde from 2-deoxy-alpha-D-ribose 1-phosphate: step 2/2. Functionally, catalyzes a reversible aldol reaction between acetaldehyde and D-glyceraldehyde 3-phosphate to generate 2-deoxy-D-ribose 5-phosphate. The chain is Deoxyribose-phosphate aldolase from Natranaerobius thermophilus (strain ATCC BAA-1301 / DSM 18059 / JW/NM-WN-LF).